The chain runs to 156 residues: MTKMNVESFNLDHTKVVAPFIRLAGTMEGLNGDVIYKYDIRFKQPNKEHMDMPGLHSLEHLMAENIRNHSDKVVDLSPMGCQTGFYVSFINHDNYDDVLNIVEATLNDVLNATEVPACNEVQCGWAASHSLEGAKTIAQAFLDKRNEWHDVFGTGK.

Residues H56, H60, and C123 each contribute to the Fe cation site.

It belongs to the LuxS family. Homodimer. It depends on Fe cation as a cofactor.

It catalyses the reaction S-(5-deoxy-D-ribos-5-yl)-L-homocysteine = (S)-4,5-dihydroxypentane-2,3-dione + L-homocysteine. In terms of biological role, involved in the synthesis of autoinducer 2 (AI-2) which is secreted by bacteria and is used to communicate both the cell density and the metabolic potential of the environment. The regulation of gene expression in response to changes in cell density is called quorum sensing. Catalyzes the transformation of S-ribosylhomocysteine (RHC) to homocysteine (HC) and 4,5-dihydroxy-2,3-pentadione (DPD). This Staphylococcus aureus (strain bovine RF122 / ET3-1) protein is S-ribosylhomocysteine lyase.